Reading from the N-terminus, the 95-residue chain is Protein TusB (95 aa).

This sequence belongs to the DsrH/TusB family. In terms of assembly, heterohexamer, formed by a dimer of trimers. The hexameric TusBCD complex contains 2 copies each of TusB, TusC and TusD. The TusBCD complex interacts with TusE.

Its subcellular location is the cytoplasm. Functionally, part of a sulfur-relay system required for 2-thiolation of 5-methylaminomethyl-2-thiouridine (mnm(5)s(2)U) at tRNA wobble positions. The polypeptide is Protein TusB (Sodalis glossinidius (strain morsitans)).